Reading from the N-terminus, the 425-residue chain is Serine--tRNA ligase (425 aa).

233–235 (TAE) contacts L-serine. 264 to 266 (RRE) is an ATP binding site. Glu287 provides a ligand contact to L-serine. 351–354 (EISS) contributes to the ATP binding site. Ser387 contributes to the L-serine binding site.

It belongs to the class-II aminoacyl-tRNA synthetase family. Type-1 seryl-tRNA synthetase subfamily. As to quaternary structure, homodimer. The tRNA molecule binds across the dimer.

The protein resides in the cytoplasm. The enzyme catalyses tRNA(Ser) + L-serine + ATP = L-seryl-tRNA(Ser) + AMP + diphosphate + H(+). The catalysed reaction is tRNA(Sec) + L-serine + ATP = L-seryl-tRNA(Sec) + AMP + diphosphate + H(+). It participates in aminoacyl-tRNA biosynthesis; selenocysteinyl-tRNA(Sec) biosynthesis; L-seryl-tRNA(Sec) from L-serine and tRNA(Sec): step 1/1. In terms of biological role, catalyzes the attachment of serine to tRNA(Ser). Is also able to aminoacylate tRNA(Sec) with serine, to form the misacylated tRNA L-seryl-tRNA(Sec), which will be further converted into selenocysteinyl-tRNA(Sec). In Thermotoga sp. (strain RQ2), this protein is Serine--tRNA ligase.